Here is a 230-residue protein sequence, read N- to C-terminus: MGRSYGGRVLAAMTLLGIPAAVLVALAAQLLFQLQAGRAELRRVRTDGLHPELDPDAGLPEAAAGALLPLATALAALAQVLGLSCLLLAALCGHLGAELARGPGPGRSDWFLYDCRLLRHSALGLFCCGVSVYLAALAIYALLLFEIEAGAAAASILGSGALILVAIMTHTLFRAVQATRRGLRELSPPSFEDEPARPSEDSKSGCRAQPPQDEETETPIGAVTHQGSHF.

A run of 4 helical transmembrane segments spans residues 12 to 32, 73 to 93, 125 to 145, and 147 to 167; these read AMTL…QLLF, ALAA…ALCG, LFCC…LLLF, and IEAG…LVAI. The interval 184-230 is disordered; sequence RELSPPSFEDEPARPSEDSKSGCRAQPPQDEETETPIGAVTHQGSHF. Over residues 194–204 the composition is skewed to basic and acidic residues; it reads EPARPSEDSKS.

The protein resides in the membrane. This chain is Transmembrane protein 221 (Tmem221), found in Mus musculus (Mouse).